The chain runs to 123 residues: Large ribosomal subunit protein bL20 (123 aa).

The protein belongs to the bacterial ribosomal protein bL20 family.

Functionally, binds directly to 23S ribosomal RNA and is necessary for the in vitro assembly process of the 50S ribosomal subunit. It is not involved in the protein synthesizing functions of that subunit. In Chlamydia trachomatis serovar D (strain ATCC VR-885 / DSM 19411 / UW-3/Cx), this protein is Large ribosomal subunit protein bL20 (rplT).